The chain runs to 108 residues: UPF0060 membrane protein Nham_2004 (108 aa).

4 consecutive transmembrane segments (helical) span residues 5-25 (AAYV…WAWL), 31-51 (VWWL…LTLV), 61-81 (AAYG…VEGL), and 88-108 (LTGA…PRQI).

Belongs to the UPF0060 family.

It localises to the cell inner membrane. In Nitrobacter hamburgensis (strain DSM 10229 / NCIMB 13809 / X14), this protein is UPF0060 membrane protein Nham_2004.